Here is a 344-residue protein sequence, read N- to C-terminus: Dihydroorotase (344 aa).

2 residues coordinate Zn(2+): histidine 13 and histidine 15. Residues 15 to 17 (HLR) and asparagine 41 contribute to the substrate site. The Zn(2+) site is built by lysine 98, histidine 135, and histidine 173. Lysine 98 carries the N6-carboxylysine modification. Residue histidine 135 coordinates substrate. Residue leucine 218 coordinates substrate. Aspartate 247 lines the Zn(2+) pocket. Residue aspartate 247 is part of the active site. Substrate is bound by residues histidine 251 and alanine 263.

The protein belongs to the metallo-dependent hydrolases superfamily. DHOase family. Class II DHOase subfamily. In terms of assembly, homodimer. The cofactor is Zn(2+).

The enzyme catalyses (S)-dihydroorotate + H2O = N-carbamoyl-L-aspartate + H(+). It participates in pyrimidine metabolism; UMP biosynthesis via de novo pathway; (S)-dihydroorotate from bicarbonate: step 3/3. Its function is as follows. Catalyzes the reversible cyclization of carbamoyl aspartate to dihydroorotate. The protein is Dihydroorotase of Neisseria meningitidis serogroup C (strain 053442).